We begin with the raw amino-acid sequence, 342 residues long: Farnesyl pyrophosphate synthase 1 (342 aa).

Isopentenyl diphosphate-binding residues include lysine 48, arginine 51, and glutamine 86. Residues aspartate 93 and aspartate 97 each coordinate Mg(2+). Arginine 102 contacts dimethylallyl diphosphate. Arginine 103 is an isopentenyl diphosphate binding site. Residues lysine 190, threonine 191, glutamine 229, lysine 246, and lysine 255 each contribute to the dimethylallyl diphosphate site.

The protein belongs to the FPP/GGPP synthase family. The cofactor is Mg(2+).

The protein localises to the cytoplasm. The catalysed reaction is isopentenyl diphosphate + dimethylallyl diphosphate = (2E)-geranyl diphosphate + diphosphate. It catalyses the reaction isopentenyl diphosphate + (2E)-geranyl diphosphate = (2E,6E)-farnesyl diphosphate + diphosphate. It functions in the pathway isoprenoid biosynthesis; farnesyl diphosphate biosynthesis; farnesyl diphosphate from geranyl diphosphate and isopentenyl diphosphate: step 1/1. The protein operates within isoprenoid biosynthesis; geranyl diphosphate biosynthesis; geranyl diphosphate from dimethylallyl diphosphate and isopentenyl diphosphate: step 1/1. In terms of biological role, catalyzes the sequential condensation of isopentenyl pyrophosphate with the allylic pyrophosphates, dimethylallyl pyrophosphate, and then with the resultant geranylpyrophosphate to the ultimate product farnesyl pyrophosphate. The polypeptide is Farnesyl pyrophosphate synthase 1 (FPS1) (Parthenium argentatum (Guayule rubber plant)).